A 296-amino-acid polypeptide reads, in one-letter code: Cytidine deaminase (296 aa).

CMP/dCMP-type deaminase domains lie at 47–167 (TESE…FGPK) and 186–296 (DSSD…VDPI). 88 to 90 (NLE) lines the substrate pocket. Residue His101 coordinates Zn(2+). Glu103 acts as the Proton donor in catalysis. Residues Cys128 and Cys131 each coordinate Zn(2+).

The protein belongs to the cytidine and deoxycytidylate deaminase family. Homodimer. It depends on Zn(2+) as a cofactor.

It catalyses the reaction cytidine + H2O + H(+) = uridine + NH4(+). The catalysed reaction is 2'-deoxycytidine + H2O + H(+) = 2'-deoxyuridine + NH4(+). Functionally, this enzyme scavenges exogenous and endogenous cytidine and 2'-deoxycytidine for UMP synthesis. This is Cytidine deaminase from Shewanella oneidensis (strain ATCC 700550 / JCM 31522 / CIP 106686 / LMG 19005 / NCIMB 14063 / MR-1).